We begin with the raw amino-acid sequence, 1142 residues long: Coiled-coil domain-containing protein 40 (1142 aa).

2 disordered regions span residues 1-197 (MAEP…QVLP) and 251-274 (PSTE…AEDE). Basic and acidic residues-rich tracts occupy residues 11 to 27 (SHPE…EGNN) and 35 to 55 (PEKD…HPEE). A compositionally biased stretch (acidic residues) spans 63–96 (AIEEGEVETEGEAAVEGEEEAVSYGDAESEEEYY). Position 252 is a phosphoserine (serine 252). Residues 265–274 (EGSDEEAEDE) are compositionally biased toward acidic residues. Coiled coils occupy residues 293 to 319 (AALK…ATKQ), 349 to 470 (HDRH…QAED), 526 to 627 (QAKS…LRRK), 684 to 950 (TSSR…LGQL), and 1005 to 1054 (VRKA…LTRL).

Belongs to the CCDC40 family.

The protein resides in the cytoplasm. The protein localises to the cell projection. Its subcellular location is the cilium. Required for assembly of dynein regulatory complex (DRC) and inner dynein arm (IDA) complexes, which are responsible for ciliary beat regulation, thereby playing a central role in motility in cilia and flagella. Probably acts together with CCDC39 to form a molecular ruler that determines the 96 nanometer (nm) repeat length and arrangements of components in cilia and flagella. Not required for outer dynein arm complexes assembly. Required for axonemal recruitment of CCDC39. The protein is Coiled-coil domain-containing protein 40 of Homo sapiens (Human).